We begin with the raw amino-acid sequence, 401 residues long: Voltage-gated potassium channel subunit beta-1 (401 aa).

Residues Thr-90, Trp-91, Gln-97, and Asp-119 each coordinate NADP(+). The Proton donor/acceptor role is filled by Tyr-124. Residues Asn-192, Ser-222, Arg-223, Gln-248, Trp-277, Ser-278, Pro-279, Leu-280, Ala-281, Cys-282, Lys-288, Arg-298, Gly-357, Ser-359, Gln-363, Glu-366, and Asn-367 each coordinate NADP(+).

It belongs to the shaker potassium channel beta subunit family. Homotetramer. Interaction with tetrameric potassium channel alpha subunits gives rise to a heterooctamer. Identified in potassium channel complexes containing KCNA1, KCNA2, KCNA4, KCNA5, KCNA6, KCNAB1 and KCNAB2. Part of a complex containing KCNA1, KCNA4 and LGI1; interaction with LGI1 inhibits down-regulation of KCNA1 channel activity. Interacts with the dimer formed by GNB1 and GNG2; this enhances KCNA1 binding. Interacts with SQSTM1.

The protein localises to the cytoplasm. Its subcellular location is the membrane. It is found in the cell membrane. It carries out the reaction a primary alcohol + NADP(+) = an aldehyde + NADPH + H(+). The enzyme catalyses a secondary alcohol + NADP(+) = a ketone + NADPH + H(+). In terms of biological role, regulatory subunit of the voltage-gated potassium (Kv) channels composed of pore-forming and potassium-conducting alpha subunits and of regulatory beta subunits. The beta-1/KCNAB1 cytoplasmic subunit mediates closure of delayed rectifier potassium channels by physically obstructing the pore via its N-terminal domain and increases the speed of channel closure for other family members. Promotes the inactivation of KCNA1, KCNA2, KCNA4, KCNA5 and KCNA6 alpha subunit-containing channels. Displays nicotinamide adenine dinucleotide phosphate (NADPH)-dependent aldoketoreductase activity by catalyzing the NADPH-dependent reduction of a variety of endogenous aldehydes and ketones. The binding of NADPH is required for efficient down-regulation of potassium channel activity. Oxidation of the bound NADPH restrains N-terminal domain from blocking the channel, thereby decreasing N-type inactivation of potassium channel activity. In Bos taurus (Bovine), this protein is Voltage-gated potassium channel subunit beta-1 (KCNAB1).